We begin with the raw amino-acid sequence, 117 residues long: UPF0102 protein Spro_4337 (117 aa).

This sequence belongs to the UPF0102 family.

The sequence is that of UPF0102 protein Spro_4337 from Serratia proteamaculans (strain 568).